The chain runs to 426 residues: 5-methylthioadenosine/S-adenosylhomocysteine deaminase (426 aa).

Residues histidine 60 and histidine 62 each coordinate Zn(2+). Positions 89 and 179 each coordinate substrate. Histidine 206 serves as a coordination point for Zn(2+). Substrate-binding residues include glutamate 209 and aspartate 294. A Zn(2+)-binding site is contributed by aspartate 294.

It belongs to the metallo-dependent hydrolases superfamily. MTA/SAH deaminase family. Zn(2+) serves as cofactor.

The enzyme catalyses S-adenosyl-L-homocysteine + H2O + H(+) = S-inosyl-L-homocysteine + NH4(+). The catalysed reaction is S-methyl-5'-thioadenosine + H2O + H(+) = S-methyl-5'-thioinosine + NH4(+). Functionally, catalyzes the deamination of 5-methylthioadenosine and S-adenosyl-L-homocysteine into 5-methylthioinosine and S-inosyl-L-homocysteine, respectively. Is also able to deaminate adenosine. The sequence is that of 5-methylthioadenosine/S-adenosylhomocysteine deaminase from Dictyoglomus thermophilum (strain ATCC 35947 / DSM 3960 / H-6-12).